We begin with the raw amino-acid sequence, 337 residues long: Terpene cyclase (337 aa).

The helical transmembrane segment at 5-25 (ASVIFLSLSVLAAVGVWGPFV) threads the bilayer. A glycan (N-linked (GlcNAc...) asparagine) is linked at Asn-65. Helical transmembrane passes span 72-92 (IAYC…VILC), 111-131 (GLLS…MSFI), 149-169 (ALIL…LNVL), 177-197 (IWGI…ARII), 222-242 (VAGG…LGIF), 267-287 (LQVD…HELI), and 298-318 (LGGL…AAAW).

Belongs to the membrane-bound ascI terpene cyclase family.

The protein resides in the membrane. Its pathway is antifungal biosynthesis. Functionally, cyclase; part of the gene cluster that mediates the biosynthesis of the tetrahydropyranyl antifungal agent lanomycin that acts as an inhibitor of CYP51 and blocks the ergosterol biosynthesis. The biosynthesis probably begins with the formation of an hexaketide, followed by methionine mediated alkylation of C-2 and C-6, and methylation of the reduced C-3 oxygen, pyran forming reductive ring closure, oxygenation of C-4, beta-keto reduction, enoyl reduction and dehydration of the remaining oxygens, and finally, acylation with glycine to complete the biosynthesis. The polypeptide is Terpene cyclase (Pyrenophora dematioidea (Helminthosporium dematioideum)).